An 87-amino-acid chain; its full sequence is Probable Fe(2+)-trafficking protein (87 aa).

It belongs to the Fe(2+)-trafficking protein family.

In terms of biological role, could be a mediator in iron transactions between iron acquisition and iron-requiring processes, such as synthesis and/or repair of Fe-S clusters in biosynthetic enzymes. The protein is Probable Fe(2+)-trafficking protein of Francisella philomiragia subsp. philomiragia (strain ATCC 25017 / CCUG 19701 / FSC 153 / O#319-036).